The sequence spans 467 residues: 3-isopropylmalate dehydratase large subunit (467 aa).

The [4Fe-4S] cluster site is built by C347, C407, and C410.

This sequence belongs to the aconitase/IPM isomerase family. LeuC type 1 subfamily. As to quaternary structure, heterodimer of LeuC and LeuD. It depends on [4Fe-4S] cluster as a cofactor.

It catalyses the reaction (2R,3S)-3-isopropylmalate = (2S)-2-isopropylmalate. It participates in amino-acid biosynthesis; L-leucine biosynthesis; L-leucine from 3-methyl-2-oxobutanoate: step 2/4. Functionally, catalyzes the isomerization between 2-isopropylmalate and 3-isopropylmalate, via the formation of 2-isopropylmaleate. The sequence is that of 3-isopropylmalate dehydratase large subunit from Trichormus variabilis (strain ATCC 29413 / PCC 7937) (Anabaena variabilis).